The chain runs to 493 residues: Glutamyl-tRNA(Gln) amidotransferase subunit A (493 aa).

Active-site charge relay system residues include lysine 79 and serine 159. The active-site Acyl-ester intermediate is serine 183.

It belongs to the amidase family. GatA subfamily. As to quaternary structure, heterotrimer of A, B and C subunits.

The enzyme catalyses L-glutamyl-tRNA(Gln) + L-glutamine + ATP + H2O = L-glutaminyl-tRNA(Gln) + L-glutamate + ADP + phosphate + H(+). In terms of biological role, allows the formation of correctly charged Gln-tRNA(Gln) through the transamidation of misacylated Glu-tRNA(Gln) in organisms which lack glutaminyl-tRNA synthetase. The reaction takes place in the presence of glutamine and ATP through an activated gamma-phospho-Glu-tRNA(Gln). This Brucella abortus (strain S19) protein is Glutamyl-tRNA(Gln) amidotransferase subunit A.